Here is a 1257-residue protein sequence, read N- to C-terminus: Elongation factor 2 (1257 aa).

A DOD-type homing endonuclease domain is found at 273–402 (LAGLMFGDGC…LQLLLQKFDV (130 aa)). The 242-residue stretch at 541–782 (VEEHHNFAAE…MVVKHLPDPV (242 aa)) folds into the tr-type G domain. Residues 616–620 (DTPGH) and 670–673 (NKVD) contribute to the GTP site. H1120 is modified (diphthamide). Residues 1237 to 1250 (ERKGLKPEPPKPED) show a composition bias toward basic and acidic residues. Positions 1237–1257 (ERKGLKPEPPKPEDYIEDYGG) are disordered.

It belongs to the TRAFAC class translation factor GTPase superfamily. Classic translation factor GTPase family. EF-G/EF-2 subfamily. In terms of processing, this protein undergoes a protein self splicing that involves a post-translational excision of the intervening region (intein) followed by peptide ligation.

It localises to the cytoplasm. Its function is as follows. Catalyzes the GTP-dependent ribosomal translocation step during translation elongation. During this step, the ribosome changes from the pre-translocational (PRE) to the post-translocational (POST) state as the newly formed A-site-bound peptidyl-tRNA and P-site-bound deacylated tRNA move to the P and E sites, respectively. Catalyzes the coordinated movement of the two tRNA molecules, the mRNA and conformational changes in the ribosome. In Methanopyrus kandleri (strain AV19 / DSM 6324 / JCM 9639 / NBRC 100938), this protein is Elongation factor 2.